The primary structure comprises 355 residues: UDP-3-O-acylglucosamine N-acyltransferase (355 aa).

His-252 acts as the Proton acceptor in catalysis.

The protein belongs to the transferase hexapeptide repeat family. LpxD subfamily. Homotrimer.

The catalysed reaction is a UDP-3-O-[(3R)-3-hydroxyacyl]-alpha-D-glucosamine + a (3R)-hydroxyacyl-[ACP] = a UDP-2-N,3-O-bis[(3R)-3-hydroxyacyl]-alpha-D-glucosamine + holo-[ACP] + H(+). It functions in the pathway bacterial outer membrane biogenesis; LPS lipid A biosynthesis. Its function is as follows. Catalyzes the N-acylation of UDP-3-O-acylglucosamine using 3-hydroxyacyl-ACP as the acyl donor. Is involved in the biosynthesis of lipid A, a phosphorylated glycolipid that anchors the lipopolysaccharide to the outer membrane of the cell. The protein is UDP-3-O-acylglucosamine N-acyltransferase of Polynucleobacter asymbioticus (strain DSM 18221 / CIP 109841 / QLW-P1DMWA-1) (Polynucleobacter necessarius subsp. asymbioticus).